Reading from the N-terminus, the 248-residue chain is Adenosylcobinamide-GDP ribazoletransferase (248 aa).

A run of 6 helical transmembrane segments spans residues F36 to L56, F59 to G79, G114 to L134, Y137 to L157, I170 to L190, and A199 to L219.

It belongs to the CobS family. Mg(2+) serves as cofactor.

It localises to the cell membrane. The enzyme catalyses alpha-ribazole + adenosylcob(III)inamide-GDP = adenosylcob(III)alamin + GMP + H(+). It catalyses the reaction alpha-ribazole 5'-phosphate + adenosylcob(III)inamide-GDP = adenosylcob(III)alamin 5'-phosphate + GMP + H(+). Its pathway is cofactor biosynthesis; adenosylcobalamin biosynthesis; adenosylcobalamin from cob(II)yrinate a,c-diamide: step 7/7. In terms of biological role, joins adenosylcobinamide-GDP and alpha-ribazole to generate adenosylcobalamin (Ado-cobalamin). Also synthesizes adenosylcobalamin 5'-phosphate from adenosylcobinamide-GDP and alpha-ribazole 5'-phosphate. This is Adenosylcobinamide-GDP ribazoletransferase from Clostridium botulinum (strain Kyoto / Type A2).